Here is a 307-residue protein sequence, read N- to C-terminus: Porphobilinogen deaminase (307 aa).

Cysteine 241 carries the S-(dipyrrolylmethanemethyl)cysteine modification.

The protein belongs to the HMBS family. Monomer. Dipyrromethane serves as cofactor.

It catalyses the reaction 4 porphobilinogen + H2O = hydroxymethylbilane + 4 NH4(+). It participates in porphyrin-containing compound metabolism; protoporphyrin-IX biosynthesis; coproporphyrinogen-III from 5-aminolevulinate: step 2/4. Tetrapolymerization of the monopyrrole PBG into the hydroxymethylbilane pre-uroporphyrinogen in several discrete steps. The protein is Porphobilinogen deaminase of Coxiella burnetii (strain CbuK_Q154) (Coxiella burnetii (strain Q154)).